Reading from the N-terminus, the 265-residue chain is MKVIRKLKAKRVVIKVGTSTLVYPDGSINLRAIDQLAFVISAMRHRGREVVLVSSGAIGVGLNYMGLKQRPKAIPEQQAIAAIGQTELISIYKERFAIYEQKIGQLLLTRDIFVYPKSHHNVLNTFEALLKQNVVPIVNENDTVAVDELDHETKFGDNDQLSAIVATNIGADLLIMLSDIDGFYDGNPNADARAQLLGHIEKVDQHTYKLAGGSGSRFGTGGMVTKLKAAERMIDANGQMILANGADPTIIFQILAGEPVGTLFG.

Residue K15 coordinates ATP. 3 residues coordinate substrate: S55, D142, and N158. ATP contacts are provided by residues 178–179 (SD) and 220–226 (TGGMVTK).

This sequence belongs to the glutamate 5-kinase family.

The protein localises to the cytoplasm. The enzyme catalyses L-glutamate + ATP = L-glutamyl 5-phosphate + ADP. It participates in amino-acid biosynthesis; L-proline biosynthesis; L-glutamate 5-semialdehyde from L-glutamate: step 1/2. Functionally, catalyzes the transfer of a phosphate group to glutamate to form L-glutamate 5-phosphate. This chain is Glutamate 5-kinase, found in Lactiplantibacillus plantarum (strain ATCC BAA-793 / NCIMB 8826 / WCFS1) (Lactobacillus plantarum).